Consider the following 178-residue polypeptide: Interleukin-10 (178 aa).

The first 18 residues, 1-18, serve as a signal peptide directing secretion; it reads MPGSALLCCLLLLTGMRI. A glycan (N-linked (GlcNAc...) asparagine) is linked at N29. 2 disulfide bridges follow: C30-C126 and C80-C132. The N-linked (GlcNAc...) asparagine glycan is linked to N134.

This sequence belongs to the IL-10 family. Homodimer. Interacts with IL10RA and IL10RB.

The protein resides in the secreted. Major immune regulatory cytokine that acts on many cells of the immune system where it has profound anti-inflammatory functions, limiting excessive tissue disruption caused by inflammation. Mechanistically, IL10 binds to its heterotetrameric receptor comprising IL10RA and IL10RB leading to JAK1 and STAT2-mediated phosphorylation of STAT3. In turn, STAT3 translocates to the nucleus where it drives expression of anti-inflammatory mediators. Targets antigen-presenting cells (APCs) such as macrophages and monocytes and inhibits their release of pro-inflammatory cytokines including granulocyte-macrophage colony-stimulating factor /GM-CSF, granulocyte colony-stimulating factor/G-CSF, IL-1 alpha, IL-1 beta, IL-6, IL-8 and TNF-alpha. Also interferes with antigen presentation by reducing the expression of MHC-class II and co-stimulatory molecules, thereby inhibiting their ability to induce T cell activation. In addition, controls the inflammatory response of macrophages by reprogramming essential metabolic pathways including mTOR signaling. This chain is Interleukin-10 (Il10), found in Mus musculus (Mouse).